A 147-amino-acid chain; its full sequence is Protein phosphatase 1 regulatory subunit 14B (147 aa).

Residues 1–15 (MADSGPAGGAALAAP) are compositionally biased toward low complexity. Positions 1-55 (MADSGPAGGAALAAPAPGPGSGSTGPRVYFQSPPGAAGEGPGGADDDGPVRRQGK) are disordered. Alanine 2 carries the post-translational modification N-acetylalanine. Residue serine 21 is modified to Phosphoserine. Residue tyrosine 29 is modified to Phosphotyrosine. Serine 32 is modified (phosphoserine). Phosphothreonine is present on threonine 57. A coiled-coil region spans residues 61-103 (DRKELRKRLNLEEWILEQLTRLYDCQEEEIPELEIDVDELLDM).

It belongs to the PP1 inhibitor family. In terms of processing, phosphorylated primarily on Thr-57 by PKC (in vitro). An unknown Ser is also phosphorylated by PKC (in vitro). As to expression, ubiquitous. Highly expressed in testis. Detected at low levels in the other tissues tested. Highly expressed in cardiac muscle, bladder and aorta (at protein level).

The protein resides in the cytoplasm. In terms of biological role, inhibitor of PPP1CA. Has over 50-fold higher inhibitory activity when phosphorylated. The polypeptide is Protein phosphatase 1 regulatory subunit 14B (Ppp1r14b) (Mus musculus (Mouse)).